The sequence spans 36 residues: Photosystem I reaction center subunit VIII (36 aa).

Residues 8–28 form a helical membrane-spanning segment; it reads AILVPIVGLVFPALSMALFFI.

The protein belongs to the PsaI family.

It is found in the plastid. The protein resides in the chloroplast thylakoid membrane. In terms of biological role, may help in the organization of the PsaL subunit. The polypeptide is Photosystem I reaction center subunit VIII (Phaeodactylum tricornutum (strain CCAP 1055/1)).